The chain runs to 85 residues: Large ribosomal subunit protein bL27 (85 aa).

The tract at residues 1–22 (MAHKKAGGSTRNGRDSESKRLG) is disordered.

Belongs to the bacterial ribosomal protein bL27 family.

The chain is Large ribosomal subunit protein bL27 from Marinomonas sp. (strain MWYL1).